Reading from the N-terminus, the 843-residue chain is Translation initiation factor IF-2 (843 aa).

Positions 198–219 (YKREEEEKKSKAKKAGGKGFKK) are disordered. Positions 207–219 (SKAKKAGGKGFKK) are enriched in basic residues. Residues 345-512 (SRAPVVTIMG…AVLLQSEVLE (168 aa)) form the tr-type G domain. The tract at residues 354 to 361 (GHVDHGKT) is G1. 354 to 361 (GHVDHGKT) provides a ligand contact to GTP. A G2 region spans residues 379 to 383 (GITQH). A G3 region spans residues 400 to 403 (DTPG). Residues 400 to 404 (DTPGH) and 454 to 457 (NKID) each bind GTP. The tract at residues 454–457 (NKID) is G4. The segment at 490 to 492 (SAK) is G5.

The protein belongs to the TRAFAC class translation factor GTPase superfamily. Classic translation factor GTPase family. IF-2 subfamily.

Its subcellular location is the cytoplasm. Functionally, one of the essential components for the initiation of protein synthesis. Protects formylmethionyl-tRNA from spontaneous hydrolysis and promotes its binding to the 30S ribosomal subunits. Also involved in the hydrolysis of GTP during the formation of the 70S ribosomal complex. In Francisella tularensis subsp. tularensis (strain WY96-3418), this protein is Translation initiation factor IF-2.